We begin with the raw amino-acid sequence, 595 residues long: Solute carrier family 13 member 1 (595 aa).

5 helical membrane-spanning segments follow: residues 13-33 (FLLVVFTVLVLLPLPLIIRSK), 40-60 (ILFVIATFWITEALPLSITAL), 77-97 (VASAYFKDFHLLLIGVICLAT), 113-133 (VMMVGVNPAWLTLGFMSSTAF), and 134-154 (LSMWLSNTSTAAMVMPIVEAV). Asn-174 carries N-linked (GlcNAc...) asparagine glycosylation. The tract at residues 190–218 (QETNERKEKTKPALGSSNDKGKVSSKMET) is disordered. Over residues 208-218 (DKGKVSSKMET) the composition is skewed to basic and acidic residues. 8 helical membrane-spanning segments follow: residues 239–259 (LMCLCIAYSSTIGGLTTITGT), 283–303 (SWFLFSFPVAVILLLLSWIWL), 348–368 (IVTLVIFIVMALLWFSRDPGF), 381–401 (GYVTDSTVALVAGILFFLIPA), 464–484 (PLGSLPVWLIILISSLIVTSL), 491–511 (PATITILFPILSPLAEAIHVN), 512–532 (PLHILLPSTLCTSFAFLLPVA), and 553–573 (AGLGVNILGVAVVMLGMFTWI). Asn-591 carries N-linked (GlcNAc...) asparagine glycosylation.

This sequence belongs to the SLC13A/DASS transporter (TC 2.A.47) family. NADC subfamily. In terms of tissue distribution, kidney and intestine.

It is found in the apical cell membrane. It catalyses the reaction sulfate(out) + 3 Na(+)(out) = sulfate(in) + 3 Na(+)(in). The enzyme catalyses selenate(out) + 3 Na(+)(out) = selenate(in) + 3 Na(+)(in). It carries out the reaction thiosulfate(out) + 3 Na(+)(out) = thiosulfate(in) + 3 Na(+)(in). Functionally, sodium:sulfate symporter that mediates sulfate reabsorption in the kidney and small intestine. Can also mediate the transport of selenate and thiosulfate. The protein is Solute carrier family 13 member 1 (Slc13a1) of Rattus norvegicus (Rat).